A 210-amino-acid polypeptide reads, in one-letter code: Small ribosomal subunit protein uS3 (210 aa).

One can recognise a KH type-2 domain in the interval I17–K86.

This sequence belongs to the universal ribosomal protein uS3 family. Part of the 30S ribosomal subunit.

Binds the lower part of the 30S subunit head. The protein is Small ribosomal subunit protein uS3 of Pyrococcus horikoshii (strain ATCC 700860 / DSM 12428 / JCM 9974 / NBRC 100139 / OT-3).